The chain runs to 496 residues: Maturase K (496 aa).

This sequence belongs to the intron maturase 2 family. MatK subfamily.

The protein resides in the plastid. Its subcellular location is the chloroplast. In terms of biological role, usually encoded in the trnK tRNA gene intron. Probably assists in splicing its own and other chloroplast group II introns. The chain is Maturase K from Paeonia officinalis (Common peony).